The sequence spans 221 residues: Probable septum site-determining protein MinC (221 aa).

It belongs to the MinC family. In terms of assembly, interacts with MinD and FtsZ.

Cell division inhibitor that blocks the formation of polar Z ring septums. Rapidly oscillates between the poles of the cell to destabilize FtsZ filaments that have formed before they mature into polar Z rings. Prevents FtsZ polymerization. This is Probable septum site-determining protein MinC from Shewanella oneidensis (strain ATCC 700550 / JCM 31522 / CIP 106686 / LMG 19005 / NCIMB 14063 / MR-1).